The chain runs to 368 residues: Putative glutamate--cysteine ligase 2 (368 aa).

Belongs to the glutamate--cysteine ligase type 2 family. YbdK subfamily.

The enzyme catalyses L-cysteine + L-glutamate + ATP = gamma-L-glutamyl-L-cysteine + ADP + phosphate + H(+). Its function is as follows. ATP-dependent carboxylate-amine ligase which exhibits weak glutamate--cysteine ligase activity. This is Putative glutamate--cysteine ligase 2 from Pseudomonas putida (strain ATCC 47054 / DSM 6125 / CFBP 8728 / NCIMB 11950 / KT2440).